The sequence spans 240 residues: Fimbriae Y protein (240 aa).

It localises to the fimbrium. The sequence is that of Fimbriae Y protein (fimY) from Salmonella typhimurium (strain LT2 / SGSC1412 / ATCC 700720).